We begin with the raw amino-acid sequence, 738 residues long: RNA polymerase II degradation factor 1 (738 aa).

In terms of domain architecture, CUE spans 21-63; the sequence is ALKSKIDTLTELFPDWTSDDLIDIVQEYDDLETIIDKITSGAV. A compositionally biased stretch (basic and acidic residues) spans 69–84; sequence VKKPAKKEKYEKKEQQ. Disordered regions lie at residues 69–455, 467–503, and 640–688; these read VKKP…QQQQ, YLSQ…QGNN, and NGQE…QPVN. Positions 103–121 are enriched in low complexity; it reads KSSNNSNSFTSTKHNSSNN. A compositionally biased stretch (basic and acidic residues) spans 211-220; sequence HNNKEEHKQI. A compositionally biased stretch (low complexity) spans 224 to 237; it reads SLSSKKTTSRTSAS. The segment covering 256–291 has biased composition (basic and acidic residues); sequence KKTESPLENVAELKKEISDIKKDDQKSEASEEKVNE. 3 positions are modified to phosphoserine: S260, S273, and S307. 2 stretches are compositionally biased toward acidic residues: residues 298 to 328 and 337 to 358; these read EQEE…EAEE and QTAE…EVTV. T338 carries the phosphothreonine modification. Low complexity-rich tracts occupy residues 380–455 and 467–498; these read VPQP…QQQQ and YLSQ…PQSQ. Residues 500 to 530 form a contains the proteolytic activation cleavage site region; that stretch reads QGNNVAAQQYYMYQNQFPGYSYPGMFDSQGY. S646 bears the Phosphoserine mark. Low complexity predominate over residues 660–688; that stretch reads QKQSQQQQQQQPQGQPQPEVQMQNGQPVN.

The protein belongs to the DEF1 family. As to quaternary structure, homodimer; may form higher order oligomers. Interacts with the large RNA polymerase II subunit RPO21; the interaction is direct and serves to bridge RPO21 to the Elongin complex in a manner dependent on transcription stress. Interacts with RAD26. Ubiquitinated. In terms of processing, proteolytically cleaved by the proteasome in response to transcription stress; the resulting N-terminal form constitutes the activated nuclear form and the C-terminal portion is degraded.

It localises to the cytoplasm. The protein localises to the nucleus. It is found in the chromosome. Its subcellular location is the telomere. Recruits the ubiquitination machinery to RNA polymerase II for polyubiquitination, removal and degradation, when the transcription-coupled repair (TCR) factor RAD26 fails to efficiently displace stalled RNA polymerase II. Also involved in telomere length regulation. Binds DNA. This Saccharomyces cerevisiae (strain JAY291) (Baker's yeast) protein is RNA polymerase II degradation factor 1 (DEF1).